Here is a 318-residue protein sequence, read N- to C-terminus: UDP-3-O-acylglucosamine N-acyltransferase (318 aa).

Residue histidine 231 is the Proton acceptor of the active site.

It belongs to the transferase hexapeptide repeat family. LpxD subfamily. In terms of assembly, homotrimer.

The enzyme catalyses a UDP-3-O-[(3R)-3-hydroxyacyl]-alpha-D-glucosamine + a (3R)-hydroxyacyl-[ACP] = a UDP-2-N,3-O-bis[(3R)-3-hydroxyacyl]-alpha-D-glucosamine + holo-[ACP] + H(+). It functions in the pathway bacterial outer membrane biogenesis; LPS lipid A biosynthesis. In terms of biological role, catalyzes the N-acylation of UDP-3-O-acylglucosamine using 3-hydroxyacyl-ACP as the acyl donor. Is involved in the biosynthesis of lipid A, a phosphorylated glycolipid that anchors the lipopolysaccharide to the outer membrane of the cell. This chain is UDP-3-O-acylglucosamine N-acyltransferase, found in Campylobacter jejuni subsp. doylei (strain ATCC BAA-1458 / RM4099 / 269.97).